A 602-amino-acid chain; its full sequence is Laccase 1 (602 aa).

The signal sequence occupies residues 1–20 (MDHFARVSLVAALLYTNTWA). Plastocyanin-like domains are found at residues 30–128 (TWEE…VRPK) and 157–345 (YLVV…RIPN). 4 residues coordinate Cu cation: H78, H80, H108, and H110. 7 N-linked (GlcNAc...) asparagine glycosylation sites follow: N176, N241, N264, N388, N430, N454, and N470. One can recognise a Plastocyanin-like 3 domain in the interval 461–584 (NEGLLLRTRN…GGMGMVIMDG (124 aa)). 3 residues coordinate Cu cation: H492, H495, and H497. Residue N512 is glycosylated (N-linked (GlcNAc...) asparagine). Cu cation is bound by residues H566, C567, H568, and H572.

The protein belongs to the multicopper oxidase family. Requires Cu cation as cofactor.

Its subcellular location is the cell surface. The protein operates within pigment biosynthesis. In terms of biological role, laccase; part of the Pks1 gene cluster that mediates the biosynthesis of an anthraquinone derivative pigment that contributes to conidial pigmentation that provides protection from UV radiation, heat and cold stress. The polyketide synthase Pks1 produces 1-acetyl-2,4,6,8-tetrahydroxy-9,10-anthraquinone though condensation of acetyl-CoA with malonyl-CoA. The dehydratase EthD and the laccase Mlac1 further convert the anthraquinone derivative into the final conidial pigment. The sequence is that of Laccase 1 from Metarhizium album (strain ARSEF 1941).